The chain runs to 140 residues: Small ribosomal subunit protein uS12m (140 aa).

The protein belongs to the universal ribosomal protein uS12 family.

It localises to the mitochondrion. The protein is Small ribosomal subunit protein uS12m (mrps12) of Dictyostelium citrinum (Slime mold).